A 168-amino-acid polypeptide reads, in one-letter code: MAAESLPFAFETVSSWELEAWYEDLQEVLSSDEIGGTYISSPGNEEEESKTFTTLDPASLAWLTEEPGPAEVTSTSQSPRSPDSSQSSMAQEEEEEDQGRTRKRKQSGQCAARAGKQRMKEKEQENERKVAQLAEENERLKLEIERLTREVETTRRALIDRMVSLHQA.

The tract at residues phenylalanine 10–leucine 18 is interaction with TRIB3. Positions phenylalanine 10–glutamine 26 are N-terminal. Residues serine 14, serine 15, serine 30, and serine 31 each carry the phosphoserine; by CK2 modification. The tract at residues isoleucine 34–valine 130 is disordered. The span at threonine 73–serine 88 shows a compositional bias: low complexity. 2 positions are modified to phosphoserine; by MAPK14: serine 78 and serine 81. The region spanning glutamine 98–arginine 161 is the bZIP domain. Positions arginine 100–lysine 129 are basic motif. A compositionally biased stretch (basic and acidic residues) spans arginine 118–valine 130. A leucine-zipper region spans residues leucine 133–leucine 147.

This sequence belongs to the bZIP family. Heterodimer. Interacts with TCF7L2/TCF4, EP300/P300, HDAC1, HDAC5 and HDAC6. Interacts with TRIB3 which blocks its association with EP300/P300. Interacts with FOXO3, CEBPB and ATF4. Ubiquitinated, leading to its degradation by the proteasome. Post-translationally, phosphorylation at serine residues by MAPK14 enhances its transcriptional activation activity while phosphorylation at serine residues by CK2 inhibits its transcriptional activation activity.

Its subcellular location is the cytoplasm. It is found in the nucleus. Functionally, multifunctional transcription factor in ER stress response. Plays an essential role in the response to a wide variety of cell stresses and induces cell cycle arrest and apoptosis in response to ER stress. Plays a dual role both as an inhibitor of CCAAT/enhancer-binding protein (C/EBP) function and as an activator of other genes. Acts as a dominant-negative regulator of C/EBP-induced transcription: dimerizes with members of the C/EBP family, impairs their association with C/EBP binding sites in the promoter regions, and inhibits the expression of C/EBP regulated genes. Positively regulates the transcription of TRIB3, IL6, IL8, IL23, TNFRSF10B/DR5, PPP1R15A/GADD34, BBC3/PUMA, BCL2L11/BIM and ERO1L. Negatively regulates; expression of BCL2 and MYOD1, ATF4-dependent transcriptional activation of asparagine synthetase (ASNS), CEBPA-dependent transcriptional activation of hepcidin (HAMP) and CEBPB-mediated expression of peroxisome proliferator-activated receptor gamma (PPARG). Inhibits the canonical Wnt signaling pathway by binding to TCF7L2/TCF4, impairing its DNA-binding properties and repressing its transcriptional activity. Plays a regulatory role in the inflammatory response through the induction of caspase-11 (CASP4/CASP11) which induces the activation of caspase-1 (CASP1) and both these caspases increase the activation of pro-IL1B to mature IL1B which is involved in the inflammatory response. Acts as a major regulator of postnatal neovascularization through regulation of endothelial nitric oxide synthase (NOS3)-related signaling. This Rattus norvegicus (Rat) protein is DNA damage-inducible transcript 3 protein (Ddit3).